The chain runs to 234 residues: Phosphoribosylaminoimidazole-succinocarboxamide synthase (234 aa).

This sequence belongs to the SAICAR synthetase family.

The enzyme catalyses 5-amino-1-(5-phospho-D-ribosyl)imidazole-4-carboxylate + L-aspartate + ATP = (2S)-2-[5-amino-1-(5-phospho-beta-D-ribosyl)imidazole-4-carboxamido]succinate + ADP + phosphate + 2 H(+). Its pathway is purine metabolism; IMP biosynthesis via de novo pathway; 5-amino-1-(5-phospho-D-ribosyl)imidazole-4-carboxamide from 5-amino-1-(5-phospho-D-ribosyl)imidazole-4-carboxylate: step 1/2. This is Phosphoribosylaminoimidazole-succinocarboxamide synthase from Pyrococcus furiosus (strain ATCC 43587 / DSM 3638 / JCM 8422 / Vc1).